The following is a 224-amino-acid chain: Charged multivesicular body protein 4b (224 aa).

Residues 1–23 form a disordered region; it reads MSVFGKLFGAGGGKAGKGGPTPQ. Position 2 is an N-acetylserine (serine 2). Lysine 6 carries the post-translational modification N6-acetyllysine. Gly residues predominate over residues 8–19; it reads FGAGGGKAGKGG. Residues 23-183 adopt a coiled-coil conformation; that stretch reads QEAIQRLRDT…EELDKNLLEI (161 aa). N6-acetyllysine is present on lysine 114. Serine 184 and serine 223 each carry phosphoserine. The tract at residues 185–224 is disordered; the sequence is GPETVPLPNVPSIALPSKPAKKKEEEDDDMKELENWAGSM.

The protein belongs to the SNF7 family. Probable core component of the endosomal sorting required for transport complex III (ESCRT-III). ESCRT-III components are thought to multimerize to form a flat lattice on the perimeter membrane of the endosome. Several assembly forms of ESCRT-III may exist that interact and act sequentially. Interacts with CHMP6 and CHMP4C. Interacts with PDCD6IP; the interaction is direct. Interacts with VPS4A; the interaction is direct. Interacts with VPS4B; the interaction is direct. Interacts with CHMP7. Interacts with CFTR; the interaction requires misfolded CFTR. Interacts with PTPN23. Interacts with CC2D1B. Post-translationally, ISGylated. Isgylation weakens its interaction with VPS4A. In terms of tissue distribution, widely expressed. Expressed at higher level in heart and skeletal muscle. Also expressed in brain, colon, thymus, spleen, kidney, liver, small intestine, placenta, lung and peripheral blood lymphocytes.

It is found in the cytoplasm. The protein resides in the cytosol. It localises to the late endosome membrane. The protein localises to the midbody. Its subcellular location is the nucleus envelope. Probable core component of the endosomal sorting required for transport complex III (ESCRT-III) which is involved in multivesicular bodies (MVBs) formation and sorting of endosomal cargo proteins into MVBs. MVBs contain intraluminal vesicles (ILVs) that are generated by invagination and scission from the limiting membrane of the endosome and mostly are delivered to lysosomes enabling degradation of membrane proteins, such as stimulated growth factor receptors, lysosomal enzymes and lipids. The MVB pathway appears to require the sequential function of ESCRT-O, -I,-II and -III complexes. ESCRT-III proteins mostly dissociate from the invaginating membrane before the ILV is released. The ESCRT machinery also functions in topologically equivalent membrane fission events, such as the terminal stages of cytokinesis. Together with SPAST, the ESCRT-III complex promotes nuclear envelope sealing and mitotic spindle disassembly during late anaphase. Plays a role in the endosomal sorting pathway. ESCRT-III proteins are believed to mediate the necessary vesicle extrusion and/or membrane fission activities, possibly in conjunction with the AAA ATPase VPS4. When overexpressed, membrane-assembled circular arrays of CHMP4B filaments can promote or stabilize negative curvature and outward budding. CHMP4A/B/C are required for the exosomal release of SDCBP, CD63 and syndecan. Majority of the protein exists in a folded closed conformation. In terms of biological role, (Microbial infection) The ESCRT machinery also functions in topologically equivalent membrane fission events, such as the budding of enveloped viruses (HIV-1 and other lentiviruses). Via its interaction with PDCD6IP involved in HIV-1 p6- and p9-dependent virus release. This Homo sapiens (Human) protein is Charged multivesicular body protein 4b (CHMP4B).